We begin with the raw amino-acid sequence, 517 residues long: Glutamyl-tRNA(Gln) amidotransferase subunit A, mitochondrial (517 aa).

Catalysis depends on charge relay system residues K58 and S131. The disordered stretch occupies residues 106 to 132; the sequence is FGMGTHSTHSAHGPVASPAGRSAGGSS. The active-site Acyl-ester intermediate is S155.

This sequence belongs to the amidase family. GatA subfamily. In terms of assembly, subunit of the heterotrimeric GatCAB amidotransferase (AdT) complex, composed of A, B and C subunits.

Its subcellular location is the mitochondrion. It catalyses the reaction L-glutamyl-tRNA(Gln) + L-glutamine + ATP + H2O = L-glutaminyl-tRNA(Gln) + L-glutamate + ADP + phosphate + H(+). Its function is as follows. Allows the formation of correctly charged Gln-tRNA(Gln) through the transamidation of misacylated Glu-tRNA(Gln) in the mitochondria. The reaction takes place in the presence of glutamine and ATP through an activated gamma-phospho-Glu-tRNA(Gln). This Pyricularia oryzae (strain 70-15 / ATCC MYA-4617 / FGSC 8958) (Rice blast fungus) protein is Glutamyl-tRNA(Gln) amidotransferase subunit A, mitochondrial.